The following is a 334-amino-acid chain: Thiamine-binding periplasmic protein (334 aa).

An N-terminal signal peptide occupies residues methionine 1–alanine 23. Thiamine-binding positions include aspartate 64 to glycine 65, alanine 166 to threonine 167, tryptophan 202, and tyrosine 220 to serine 223.

It belongs to the bacterial solute-binding protein 1 family. The complex is composed of two ATP-binding proteins (ThiQ), two transmembrane proteins (ThiP) and a solute-binding protein (ThiB).

The protein localises to the periplasm. Its function is as follows. Part of the ABC transporter complex ThiBPQ involved in thiamine import. In Brucella abortus biovar 1 (strain 9-941), this protein is Thiamine-binding periplasmic protein (thiB).